Consider the following 256-residue polypeptide: 1-(5-phosphoribosyl)-5-[(5-phosphoribosylamino)methylideneamino] imidazole-4-carboxamide isomerase (256 aa).

Asp-8 functions as the Proton acceptor in the catalytic mechanism. Asp-129 (proton donor) is an active-site residue.

The protein belongs to the HisA/HisF family.

It is found in the cytoplasm. It carries out the reaction 1-(5-phospho-beta-D-ribosyl)-5-[(5-phospho-beta-D-ribosylamino)methylideneamino]imidazole-4-carboxamide = 5-[(5-phospho-1-deoxy-D-ribulos-1-ylimino)methylamino]-1-(5-phospho-beta-D-ribosyl)imidazole-4-carboxamide. Its pathway is amino-acid biosynthesis; L-histidine biosynthesis; L-histidine from 5-phospho-alpha-D-ribose 1-diphosphate: step 4/9. This chain is 1-(5-phosphoribosyl)-5-[(5-phosphoribosylamino)methylideneamino] imidazole-4-carboxamide isomerase, found in Syntrophobacter fumaroxidans (strain DSM 10017 / MPOB).